Here is a 247-residue protein sequence, read N- to C-terminus: UPF0280 protein MmarC6_1437 (247 aa).

The protein belongs to the UPF0280 family.

This is UPF0280 protein MmarC6_1437 from Methanococcus maripaludis (strain C6 / ATCC BAA-1332).